Consider the following 92-residue polypeptide: Putative lambdoid prophage defective integrase (92 aa).

The protein belongs to the 'phage' integrase family.

The sequence is that of Putative lambdoid prophage defective integrase (intG) from Escherichia coli O157:H7.